Reading from the N-terminus, the 310-residue chain is Aspartate carbamoyltransferase catalytic subunit (310 aa).

Carbamoyl phosphate-binding residues include Arg-58 and Thr-59. Lys-86 contributes to the L-aspartate binding site. Arg-108, His-136, and Gln-139 together coordinate carbamoyl phosphate. Positions 169 and 224 each coordinate L-aspartate. The carbamoyl phosphate site is built by Gly-265 and Pro-266.

This sequence belongs to the aspartate/ornithine carbamoyltransferase superfamily. ATCase family. In terms of assembly, heterododecamer (2C3:3R2) of six catalytic PyrB chains organized as two trimers (C3), and six regulatory PyrI chains organized as three dimers (R2).

It catalyses the reaction carbamoyl phosphate + L-aspartate = N-carbamoyl-L-aspartate + phosphate + H(+). It functions in the pathway pyrimidine metabolism; UMP biosynthesis via de novo pathway; (S)-dihydroorotate from bicarbonate: step 2/3. Its function is as follows. Catalyzes the condensation of carbamoyl phosphate and aspartate to form carbamoyl aspartate and inorganic phosphate, the committed step in the de novo pyrimidine nucleotide biosynthesis pathway. The sequence is that of Aspartate carbamoyltransferase catalytic subunit from Trichlorobacter lovleyi (strain ATCC BAA-1151 / DSM 17278 / SZ) (Geobacter lovleyi).